A 76-amino-acid chain; its full sequence is Large ribosomal subunit protein bL31 (76 aa).

C16, C18, C37, and C40 together coordinate Zn(2+).

Belongs to the bacterial ribosomal protein bL31 family. Type A subfamily. Part of the 50S ribosomal subunit. The cofactor is Zn(2+).

Functionally, binds the 23S rRNA. The sequence is that of Large ribosomal subunit protein bL31 from Solibacter usitatus (strain Ellin6076).